Consider the following 255-residue polypeptide: Malonyl-[acyl-carrier protein] O-methyltransferase (255 aa).

It belongs to the methyltransferase superfamily.

It carries out the reaction malonyl-[ACP] + S-adenosyl-L-methionine = malonyl-[ACP] methyl ester + S-adenosyl-L-homocysteine. It participates in cofactor biosynthesis; biotin biosynthesis. In terms of biological role, converts the free carboxyl group of a malonyl-thioester to its methyl ester by transfer of a methyl group from S-adenosyl-L-methionine (SAM). It allows to synthesize pimeloyl-ACP via the fatty acid synthetic pathway. The protein is Malonyl-[acyl-carrier protein] O-methyltransferase of Serratia marcescens.